The following is a 326-amino-acid chain: Polycomb complex protein BMI-1 (326 aa).

The RING-type zinc finger occupies 18-57; sequence CVLCGGYFIDATTIIECLHSFCKTCIVRYLETSKYCPICD. Residues 81 to 95 carry the Nuclear localization signal motif; it reads KLVPGLFKNEMKRRR. The segment at 162 to 182 is interaction with PHC2; it reads RYLRCPAAMTVMHLRKFLRSK. Residues 164 to 228 are interaction with E4F1; that stretch reads LRCPAAMTVM…GPLPLKYRVR (65 aa). A disordered region spans residues 236–326; the sequence is ISHQRDGLTN…VNGSSATSSG (91 aa). Residues 266 to 278 show a composition bias toward low complexity; it reads PSTSSCLPSPSTP. Residues 279–309 show a composition bias toward polar residues; that stretch reads VQSPHPQFPHISSTMNGTSNSPSGNHQSSFA. Positions 315-326 are enriched in low complexity; the sequence is SSVNGSSATSSG.

In terms of assembly, component of a PRC1-like complex. Identified in a PRC1-like HPRC-H complex with CBX2, CBX4, CBX8, PHC1, PHC2, PHC3 RING1 and RNF2. Interacts with RNF2/RING2. Interacts with RING1. Part of a complex that contains RNF2, UB2D3 and BMI1, where RNF2 and BMI1 form a tight heterodimer, and UB2D3 interacts only with RNF2. The complex composed of RNF2, UB2D3 and BMI1 binds nucleosomes, and has activity only with nucleosomal histone H2A. Interacts with CBX7 and CBX8. Interacts with SPOP. Part of a complex consisting of BMI1, CUL3 and SPOP. Interacts with E4F1. Interacts with PHC2. Interacts with zinc finger protein ZNF277. May be part of a complex including at least ZNF277, BMI1 and RNF2/RING2. Monoubiquitinated. May be polyubiquitinated; which does not lead to proteasomal degradation.

The protein resides in the nucleus. Its subcellular location is the cytoplasm. Its function is as follows. Component of a Polycomb group (PcG) multiprotein PRC1-like complex, a complex class required to maintain the transcriptionally repressive state of many genes, including Hox genes, throughout development. PcG PRC1 complex acts via chromatin remodeling and modification of histones; it mediates monoubiquitination of histone H2A 'Lys-119', rendering chromatin heritably changed in its expressibility. The complex composed of RNF2, UB2D3 and BMI1 binds nucleosomes, and has activity only with nucleosomal histone H2A. In the PRC1-like complex, regulates the E3 ubiquitin-protein ligase activity of RNF2/RING2. The chain is Polycomb complex protein BMI-1 (BMI1) from Homo sapiens (Human).